Here is a 188-residue protein sequence, read N- to C-terminus: UPF0200 protein YG5714_1176 (188 aa).

An ATP-binding site is contributed by Gly15 to Ser22.

It belongs to the UPF0200 family.

This Saccharolobus islandicus (strain Y.G.57.14 / Yellowstone #1) (Sulfolobus islandicus) protein is UPF0200 protein YG5714_1176.